The following is a 590-amino-acid chain: Sulfoacetaldehyde acetyltransferase (590 aa).

It belongs to the TPP enzyme family. The cofactor is Mg(2+). Requires thiamine diphosphate as cofactor.

It is found in the cytoplasm. It catalyses the reaction acetyl phosphate + sulfite + H(+) = sulfoacetaldehyde + phosphate. Its pathway is organosulfur degradation; taurine degradation via aerobic pathway; acetyl phosphate and sulfite from taurine: step 2/2. The polypeptide is Sulfoacetaldehyde acetyltransferase (Rhodobacter capsulatus (strain ATCC BAA-309 / NBRC 16581 / SB1003)).